The chain runs to 440 residues: GTPase Obg (440 aa).

The Obg domain occupies 5–163; sequence STFVDQTKIE…RTLRLELKVL (159 aa). Residues 164-338 form the OBG-type G domain; the sequence is ADVGLVGFPS…LMSRAADLVS (175 aa). GTP contacts are provided by residues 170–177, 195–199, 217–220, 288–291, and 319–321; these read GFPSVGKS, FTTLK, DLPG, SQMD, and SSV. Mg(2+) contacts are provided by serine 177 and threonine 197. In terms of domain architecture, OCT spans 362–440; the sequence is YHRPEKMEFT…IGDFSFEFVQ (79 aa).

Belongs to the TRAFAC class OBG-HflX-like GTPase superfamily. OBG GTPase family. In terms of assembly, monomer. Mg(2+) serves as cofactor.

It localises to the cytoplasm. An essential GTPase which binds GTP, GDP and possibly (p)ppGpp with moderate affinity, with high nucleotide exchange rates and a fairly low GTP hydrolysis rate. Plays a role in control of the cell cycle, stress response, ribosome biogenesis and in those bacteria that undergo differentiation, in morphogenesis control. The sequence is that of GTPase Obg from Lactobacillus delbrueckii subsp. bulgaricus (strain ATCC 11842 / DSM 20081 / BCRC 10696 / JCM 1002 / NBRC 13953 / NCIMB 11778 / NCTC 12712 / WDCM 00102 / Lb 14).